The primary structure comprises 161 residues: 6,7-dimethyl-8-ribityllumazine synthase (161 aa).

5-amino-6-(D-ribitylamino)uracil is bound by residues Trp-31, 63–65 (SFE), and 85–87 (VVI). Residue 90 to 91 (GT) participates in (2S)-2-hydroxy-3-oxobutyl phosphate binding. His-93 (proton donor) is an active-site residue. Phe-118 is a binding site for 5-amino-6-(D-ribitylamino)uracil. Residue Arg-132 coordinates (2S)-2-hydroxy-3-oxobutyl phosphate.

This sequence belongs to the DMRL synthase family.

It carries out the reaction (2S)-2-hydroxy-3-oxobutyl phosphate + 5-amino-6-(D-ribitylamino)uracil = 6,7-dimethyl-8-(1-D-ribityl)lumazine + phosphate + 2 H2O + H(+). It functions in the pathway cofactor biosynthesis; riboflavin biosynthesis; riboflavin from 2-hydroxy-3-oxobutyl phosphate and 5-amino-6-(D-ribitylamino)uracil: step 1/2. Catalyzes the formation of 6,7-dimethyl-8-ribityllumazine by condensation of 5-amino-6-(D-ribitylamino)uracil with 3,4-dihydroxy-2-butanone 4-phosphate. This is the penultimate step in the biosynthesis of riboflavin. In Paenarthrobacter aurescens (strain TC1), this protein is 6,7-dimethyl-8-ribityllumazine synthase.